Here is a 491-residue protein sequence, read N- to C-terminus: Anthranilate synthase component 1 (491 aa).

Residues Ser49 and 271 to 273 contribute to the L-tryptophan site; that span reads PYL. 306–307 lines the chorismate pocket; the sequence is GT. Glu333 lines the Mg(2+) pocket. Chorismate contacts are provided by residues Tyr421, Arg441, 455–457, and Gly457; that span reads GAG. Glu470 contacts Mg(2+).

Belongs to the anthranilate synthase component I family. Heterotetramer consisting of two non-identical subunits: a beta subunit (TrpG) and a large alpha subunit (TrpE). Requires Mg(2+) as cofactor.

The enzyme catalyses chorismate + L-glutamine = anthranilate + pyruvate + L-glutamate + H(+). Its pathway is amino-acid biosynthesis; L-tryptophan biosynthesis; L-tryptophan from chorismate: step 1/5. With respect to regulation, feedback inhibited by tryptophan. Its function is as follows. Part of a heterotetrameric complex that catalyzes the two-step biosynthesis of anthranilate, an intermediate in the biosynthesis of L-tryptophan. In the first step, the glutamine-binding beta subunit (TrpG) of anthranilate synthase (AS) provides the glutamine amidotransferase activity which generates ammonia as a substrate that, along with chorismate, is used in the second step, catalyzed by the large alpha subunit of AS (TrpE) to produce anthranilate. In the absence of TrpG, TrpE can synthesize anthranilate directly from chorismate and high concentrations of ammonia. The sequence is that of Anthranilate synthase component 1 (trpE) from Neisseria meningitidis serogroup B (strain ATCC BAA-335 / MC58).